A 466-amino-acid chain; its full sequence is Histidine--tRNA ligase (466 aa).

It belongs to the class-II aminoacyl-tRNA synthetase family. In terms of assembly, homodimer.

It localises to the cytoplasm. It catalyses the reaction tRNA(His) + L-histidine + ATP = L-histidyl-tRNA(His) + AMP + diphosphate + H(+). The chain is Histidine--tRNA ligase from Bifidobacterium longum subsp. infantis (strain ATCC 15697 / DSM 20088 / JCM 1222 / NCTC 11817 / S12).